A 385-amino-acid polypeptide reads, in one-letter code: Prophage integrase IntS (385 aa).

Positions Asn91 to Ile172 constitute a Core-binding (CB) domain. One can recognise a Tyr recombinase domain in the interval Lys195 to Met373. Residues Arg234, Lys261, His324, Arg327, and His350 contribute to the active site. Tyr360 serves as the catalytic O-(3'-phospho-DNA)-tyrosine intermediate.

Belongs to the 'phage' integrase family.

Integrase is necessary for integration of the phage into the host genome by site-specific recombination. In conjunction with excisionase, integrase is also necessary for excision of the prophage from the host genome. This Escherichia coli (strain K12) protein is Prophage integrase IntS (intS).